Reading from the N-terminus, the 92-residue chain is Bombyxin A-5 (92 aa).

Residues 1–19 (MKLLLAIALMLTTVMWAST) form the signal peptide. A Pyrrolidone carboxylic acid modification is found at glutamine 20. 3 cysteine pairs are disulfide-bonded: cysteine 29–cysteine 79, cysteine 41–cysteine 92, and cysteine 78–cysteine 83. The propeptide at 50–71 (SDAQFASYGSAWLMPYSEGRDQ) is c peptide like.

The protein belongs to the insulin family. Heterodimer of a B chain and an A chain linked by two disulfide bonds.

Its subcellular location is the secreted. In terms of biological role, brain peptide responsible for activation of prothoracic glands to produce ecdysone in insects. This is Bombyxin A-5 (BBXA5) from Bombyx mori (Silk moth).